We begin with the raw amino-acid sequence, 184 residues long: Probable DNA-directed RNA polymerase subunit delta (184 aa).

Residues 14–82 (KSFIDMAHTL…GENNWGLRDW (69 aa)) enclose the HTH HARE-type domain. A disordered region spans residues 114–184 (LLGEEEEEID…FNDDPDDDKI (71 aa)). Acidic residues predominate over residues 117–184 (EEEEEIDDQE…FNDDPDDDKI (68 aa)).

Belongs to the RpoE family. RNAP is composed of a core of 2 alpha, a beta and a beta' subunits. The core is associated with a delta subunit and one of several sigma factors.

Functionally, participates in both the initiation and recycling phases of transcription. In the presence of the delta subunit, RNAP displays an increased specificity of transcription, a decreased affinity for nucleic acids, and an increased efficiency of RNA synthesis because of enhanced recycling. This is Probable DNA-directed RNA polymerase subunit delta from Staphylococcus carnosus (strain TM300).